Here is a 364-residue protein sequence, read N- to C-terminus: Fructose-bisphosphate aldolase B (364 aa).

Alanine 2 carries the N-acetylalanine modification. Lysine 13 carries the N6-succinyllysine modification. The residue at position 36 (serine 36) is a Phosphoserine. Threonine 39 is subject to Phosphothreonine. Arginine 43 is a binding site for beta-D-fructose 1,6-bisphosphate. Serine 89 carries the phosphoserine modification. Phosphothreonine is present on threonine 119. Lysine 121 bears the N6-succinyllysine mark. The residue at position 132 (serine 132) is a Phosphoserine. Glutamate 188 (proton acceptor) is an active-site residue. The Schiff-base intermediate with dihydroxyacetone-P role is filled by lysine 230. Residues serine 272, serine 276, serine 299, and serine 301 each carry the phosphoserine modification. 272-274 contributes to the beta-D-fructose 1,6-bisphosphate binding site; it reads SGG. Arginine 304 contributes to the beta-D-fructose 1,6-bisphosphate binding site. A Phosphoserine modification is found at serine 309. An N6-succinyllysine modification is found at lysine 317.

Belongs to the class I fructose-bisphosphate aldolase family. In terms of assembly, homotetramer. Interacts with BBS1, BBS2, BBS4 and BBS7. Forms a ternary complex with G6PD and TP53; this interaction is direct.

The protein resides in the cytoplasm. The protein localises to the cytosol. It localises to the cytoskeleton. Its subcellular location is the microtubule organizing center. It is found in the centrosome. The protein resides in the centriolar satellite. It catalyses the reaction beta-D-fructose 1,6-bisphosphate = D-glyceraldehyde 3-phosphate + dihydroxyacetone phosphate. The catalysed reaction is beta-D-fructose 1-phosphate = D-glyceraldehyde + dihydroxyacetone phosphate. Its pathway is carbohydrate degradation; glycolysis; D-glyceraldehyde 3-phosphate and glycerone phosphate from D-glucose: step 4/4. It functions in the pathway carbohydrate biosynthesis; gluconeogenesis. It participates in carbohydrate metabolism; fructose metabolism. Catalyzes the aldol cleavage of fructose 1,6-biphosphate to form two triosephosphates dihydroxyacetone phosphate and D-glyceraldehyde 3-phosphate in glycolysis as well as the reverse stereospecific aldol addition reaction in gluconeogenesis. In fructolysis, metabolizes fructose 1-phosphate derived from the phosphorylation of dietary fructose by fructokinase into dihydroxyacetone phosphate and D-glyceraldehyde. Acts as an adapter independently of its enzymatic activity, exerts a tumor suppressor role by stabilizing the ternary complex with G6PD and TP53 to inhibit G6PD activity and keep oxidative pentose phosphate metabolism in check. This Homo sapiens (Human) protein is Fructose-bisphosphate aldolase B.